A 592-amino-acid chain; its full sequence is Ferric-chelate reductase 1 (592 aa).

Residues 2–22 form a helical membrane-spanning segment; sequence AVSGFTLGTCILLLHISYVAN. The Reelin domain occupies 13 to 179; sequence LLLHISYVAN…FTTPKATVVP (167 aa). N-linked (GlcNAc...) asparagine glycosylation is found at Asn-138, Asn-308, and Asn-321. In terms of domain architecture, DOMON spans 216 to 331; sequence EASCVFLSFT…TSYYIFLADG (116 aa). The Cytochrome b561 domain maps to 335-534; sequence DGRIYKHSQQ…VGTEVVLEVH (200 aa). Residues 372 to 392 form a helical membrane-spanning segment; sequence VHGALMFVAWMTTVSIGVLVA. The heme b site is built by His-373 and His-414. 2 helical membrane passes run 415–435 and 446–466; these read RMLM…PFIY and HPYL…LAVF. Heme b contacts are provided by His-446 and His-482. Transmembrane regions (helical) follow at residues 491 to 511, 515 to 535, and 569 to 589; these read IIAV…LPDS, YAMT…EVHA, and AVLA…LSAI.

This sequence belongs to the FRRS1 family. Heme b serves as cofactor.

The protein localises to the membrane. In terms of biological role, ferric-chelate reductases reduce Fe(3+) to Fe(2+) before its transport from the endosome to the cytoplasm. The polypeptide is Ferric-chelate reductase 1 (FRRS1) (Homo sapiens (Human)).